Consider the following 450-residue polypeptide: Tubulin alpha-1 chain (450 aa).

Positions 11, 71, 144, 145, 179, 206, and 228 each coordinate GTP. E71 contacts Mg(2+). The active site involves E254.

This sequence belongs to the tubulin family. In terms of assembly, dimer of alpha and beta chains. A typical microtubule is a hollow water-filled tube with an outer diameter of 25 nm and an inner diameter of 15 nM. Alpha-beta heterodimers associate head-to-tail to form protofilaments running lengthwise along the microtubule wall with the beta-tubulin subunit facing the microtubule plus end conferring a structural polarity. Microtubules usually have 13 protofilaments but different protofilament numbers can be found in some organisms and specialized cells. It depends on Mg(2+) as a cofactor. Undergoes a tyrosination/detyrosination cycle, the cyclic removal and re-addition of a C-terminal tyrosine residue by the enzymes tubulin tyrosine carboxypeptidase (TTCP) and tubulin tyrosine ligase (TTL), respectively.

It localises to the cytoplasm. The protein resides in the cytoskeleton. It catalyses the reaction GTP + H2O = GDP + phosphate + H(+). Its function is as follows. Tubulin is the major constituent of microtubules, a cylinder consisting of laterally associated linear protofilaments composed of alpha- and beta-tubulin heterodimers. Microtubules grow by the addition of GTP-tubulin dimers to the microtubule end, where a stabilizing cap forms. Below the cap, tubulin dimers are in GDP-bound state, owing to GTPase activity of alpha-tubulin. This chain is Tubulin alpha-1 chain (TUBA1), found in Hordeum vulgare (Barley).